A 122-amino-acid polypeptide reads, in one-letter code: Large ribosomal subunit protein uL14 (122 aa).

Belongs to the universal ribosomal protein uL14 family. As to quaternary structure, part of the 50S ribosomal subunit. Forms a cluster with proteins L3 and L19. In the 70S ribosome, L14 and L19 interact and together make contacts with the 16S rRNA in bridges B5 and B8.

Its function is as follows. Binds to 23S rRNA. Forms part of two intersubunit bridges in the 70S ribosome. This chain is Large ribosomal subunit protein uL14, found in Thermotoga maritima (strain ATCC 43589 / DSM 3109 / JCM 10099 / NBRC 100826 / MSB8).